Consider the following 197-residue polypeptide: Probable low-affinity putrescine importer PlaP (197 aa).

Transmembrane regions (helical) follow at residues 33–53 (GVLI…HAGV), 85–105 (VLLV…TATA), 107–127 (INLG…SQFW), 140–160 (FNYL…WINL), and 163–183 (SSMV…ACVT).

It belongs to the amino acid-polyamine-organocation (APC) superfamily.

It localises to the cell inner membrane. It carries out the reaction putrescine(in) + H(+)(in) = putrescine(out) + H(+)(out). Functionally, putrescine importer. This is Probable low-affinity putrescine importer PlaP (plaP) from Klebsiella pneumoniae.